A 142-amino-acid chain; its full sequence is Fusaric acid resistance protein FusB (142 aa).

Residues 73-142 (AAPCSRKAST…ASCSPAIRPR (70 aa)) form a disordered region. Residues 81–142 (STGSPARSSG…ASCSPAIRPR (62 aa)) show a composition bias toward low complexity.

Involved in the resistance (detoxification) of the fungal toxin fusaric acid. This Burkholderia cepacia (Pseudomonas cepacia) protein is Fusaric acid resistance protein FusB (fusB).